A 518-amino-acid chain; its full sequence is Glutamate--cysteine ligase (518 aa).

It belongs to the glutamate--cysteine ligase type 1 family. Type 1 subfamily.

The catalysed reaction is L-cysteine + L-glutamate + ATP = gamma-L-glutamyl-L-cysteine + ADP + phosphate + H(+). It participates in sulfur metabolism; glutathione biosynthesis; glutathione from L-cysteine and L-glutamate: step 1/2. The protein is Glutamate--cysteine ligase of Buchnera aphidicola subsp. Acyrthosiphon pisum (strain 5A).